A 573-amino-acid chain; its full sequence is NEDD4-binding protein 3-B (573 aa).

Disordered stretches follow at residues glutamate 119–proline 138, cysteine 173–serine 220, and glycine 384–aspartate 405. The segment covering leucine 125–arginine 135 has biased composition (basic and acidic residues). Residues serine 186 to serine 196 are compositionally biased toward low complexity. Polar residues-rich tracts occupy residues aspartate 207–serine 220 and lysine 392–proline 401. A coiled-coil region spans residues glutamate 287 to serine 474.

This sequence belongs to the N4BP3 family.

The protein resides in the cytoplasmic vesicle. Its subcellular location is the cell projection. The protein localises to the axon. It localises to the dendrite. In terms of biological role, plays a role in axon and dendrite arborization during cranial nerve development. Also important for neural crest migration and early development of other anterior structures including eye, brain and cranial cartilage. In Xenopus laevis (African clawed frog), this protein is NEDD4-binding protein 3-B.